Consider the following 31-residue polypeptide: Beta-endorphin (31 aa).

It belongs to the POMC family.

The protein resides in the secreted. Beta-endorphin and Met-enkephalin are endogenous opiates. The polypeptide is Beta-endorphin (POMC) (Camelus dromedarius (Dromedary)).